The sequence spans 150 residues: UPF0756 membrane protein NT05HA_0561 (150 aa).

4 helical membrane-spanning segments follow: residues 1–21, 52–72, 81–101, and 128–148; these read MSLQ…LGIF, YGLS…LVSG, AFVS…AWLA, and FLGG…VLIG.

Belongs to the UPF0756 family.

The protein localises to the cell membrane. In Aggregatibacter aphrophilus (strain NJ8700) (Haemophilus aphrophilus), this protein is UPF0756 membrane protein NT05HA_0561.